A 427-amino-acid chain; its full sequence is MSNNQTLFERAQRTIPGGVNSPVRAFRSVGGTPRFVARAQGAYFWDADGKRYIDYIGSWGPMIVGHVHPDVLAAVQRVLADGFSFGAPTEAEIEIAEEICKLVPSIEQVRMVSSGTEATMSALRLARGFTGRSRIVKFEGCYHGHADSLLVKAGSGLLTFGNPTSAGVPADVAKHTTVLEYNNVAALEEAFAAFGGEIAAVIVEPVAGNMNLVRGTPEFLNALRALTAKHGAVLIFDEVMCGFRVALGGAQQHYGITPDLTCLGKVIGGGMPAAAFGGRGDIMSHLAPLGDVYQAGTLSGNPVAVAAGLATLRLIQAPGFHDALADKTRRLADGLAAEARAAGVPFSADAIGGMFGLYFTEQVPASFADVTKSDIERFNRFFHLMLDAGVYFAPSAYEAGFVSSAHDDATLDATLDAARRAFAALRA.

K265 bears the N6-(pyridoxal phosphate)lysine mark.

This sequence belongs to the class-III pyridoxal-phosphate-dependent aminotransferase family. HemL subfamily. Homodimer. Pyridoxal 5'-phosphate is required as a cofactor.

Its subcellular location is the cytoplasm. The enzyme catalyses (S)-4-amino-5-oxopentanoate = 5-aminolevulinate. The protein operates within porphyrin-containing compound metabolism; protoporphyrin-IX biosynthesis; 5-aminolevulinate from L-glutamyl-tRNA(Glu): step 2/2. This chain is Glutamate-1-semialdehyde 2,1-aminomutase, found in Burkholderia mallei (strain NCTC 10229).